Consider the following 78-residue polypeptide: UPF0335 protein RrIowa_0193 (78 aa).

Belongs to the UPF0335 family.

The polypeptide is UPF0335 protein RrIowa_0193 (Rickettsia rickettsii (strain Iowa)).